A 600-amino-acid chain; its full sequence is Spore coat protein SP96 (600 aa).

The DSCP-N domain occupies 21-140 (QSCSSYSGDN…DVCQCKGGQT (120 aa)). The interval 139–178 (QTSGGSTTGSQTSGGSTSGGSTTGSQTSGGSTTGSQTSGS) is disordered. Low complexity predominate over residues 161–178 (TGSQTSGGSTTGSQTSGS). Follistatin-like domains lie at 184–206 (SCSNTQCPNGFYCQVQGNNAVCV), 220–243 (PCDTVQCPYGYSCESRDGFEAKCT), 267–289 (LCDNVHCPRGYKCNAKNGVAKCI), 297–319 (VCRNIQCPTGYRCEDHNRNPICV), 331–359 (TCNDVNCEASGLVCVMTRARCKVGAAKCC), and 394–416 (PCSVAQCPTGYVCVAQNNVAVCL). The disordered stretch occupies residues 420-530 (TTTTGSTSDS…ASSSSASSSS (111 aa)).

In terms of processing, glycosylated; may contain fucose and GlcNAc-alpha-1-P-Ser.

The protein localises to the spore wall. The polypeptide is Spore coat protein SP96 (cotA) (Dictyostelium discoideum (Social amoeba)).